The chain runs to 354 residues: NADH-quinone oxidoreductase subunit H (354 aa).

The next 8 membrane-spanning stretches (helical) occupy residues W16 to I36, Y90 to I110, V126 to A146, M170 to V190, I197 to L217, V249 to F269, V290 to F310, and V329 to V349.

It belongs to the complex I subunit 1 family. In terms of assembly, NDH-1 is composed of 14 different subunits. Subunits NuoA, H, J, K, L, M, N constitute the membrane sector of the complex.

It is found in the cell inner membrane. The catalysed reaction is a quinone + NADH + 5 H(+)(in) = a quinol + NAD(+) + 4 H(+)(out). In terms of biological role, NDH-1 shuttles electrons from NADH, via FMN and iron-sulfur (Fe-S) centers, to quinones in the respiratory chain. The immediate electron acceptor for the enzyme in this species is believed to be ubiquinone. Couples the redox reaction to proton translocation (for every two electrons transferred, four hydrogen ions are translocated across the cytoplasmic membrane), and thus conserves the redox energy in a proton gradient. This subunit may bind ubiquinone. This Hydrogenovibrio crunogenus (strain DSM 25203 / XCL-2) (Thiomicrospira crunogena) protein is NADH-quinone oxidoreductase subunit H.